The following is a 439-amino-acid chain: Chitinase-like protein Idgf1 (439 aa).

The first 20 residues, 1–20 (MRFQLCYLLGLLSVTSLSHA), serve as a signal peptide directing secretion. In terms of domain architecture, GH18 spans 22 to 439 (SNLICYYDST…IVRSIKYFMG (418 aa)). The cysteines at positions 26 and 53 are disulfide-linked. N-linked (GlcNAc...) asparagine glycosylation is found at Asn122, Asn218, and Asn346. A disulfide bridge links Cys340 with Cys423.

It belongs to the glycosyl hydrolase 18 family. IDGF subfamily. Glycosylated.

It is found in the secreted. In terms of biological role, cooperates with insulin-like peptides to stimulate the proliferation, polarization and motility of imaginal disk cells. May act by stabilizing the binding of insulin-like peptides to its receptor through a simultaneous interaction with both molecules to form a multiprotein signaling complex. The protein is Chitinase-like protein Idgf1 (Idgf1) of Drosophila yakuba (Fruit fly).